Here is a 273-residue protein sequence, read N- to C-terminus: Lactose transport system permease protein LacG (273 aa).

A run of 6 helical transmembrane segments spans residues 15–35, 77–97, 110–130, 134–154, 182–204, and 240–260; these read YSVLSLAAFLSIFPFIWMVIG, IALVGTALTLLVSSLAGYGFE, VILLTLMVPFAALMIPLFMLM, GLLNTHIAIMLPMIASAFIIF, FFYIYVPVMRSTYAAAFVIVFML, and GTVMIGTILATLPTLLVFFAM. In terms of domain architecture, ABC transmembrane type-1 spans 71-260; sequence FWNSVKIALV…LPTLLVFFAM (190 aa).

It belongs to the binding-protein-dependent transport system permease family. MalFG subfamily.

It localises to the cell inner membrane. In terms of biological role, part of the binding-protein-dependent transport system for lactose. Probably responsible for the translocation of the substrate across the membrane. This is Lactose transport system permease protein LacG (lacG) from Rhizobium radiobacter (Agrobacterium tumefaciens).